Reading from the N-terminus, the 64-residue chain is Small ribosomal subunit protein eS17 (64 aa).

The protein belongs to the eukaryotic ribosomal protein eS17 family.

The chain is Small ribosomal subunit protein eS17 from Methanospirillum hungatei JF-1 (strain ATCC 27890 / DSM 864 / NBRC 100397 / JF-1).